We begin with the raw amino-acid sequence, 579 residues long: Vitamin B6 transporter TPN1 (579 aa).

The next 12 membrane-spanning stretches (helical) occupy residues 99–119, 123–143, 158–178, 199–219, 222–242, 275–295, 303–323, 363–383, 395–415, 422–442, 520–540, and 546–566; these read TGGL…GLSF, LASS…CSIM, LFGW…VMGW, PLWV…IFGI, VIKV…LLYI, LCYS…ILFP, IFCL…ILGL, VVVL…SAAF, IPRW…ALIG, ILGN…ILLF, FAFI…YWIG, and FGEY…GVVY.

The protein belongs to the purine-cytosine permease (2.A.39) family.

It is found in the membrane. Functionally, thiamine-regulated, high affinity import carrier of pyridoxine, pyridoxal and pyridoxamine. The protein is Vitamin B6 transporter TPN1 (TPN1) of Saccharomyces cerevisiae (Baker's yeast).